A 186-amino-acid chain; its full sequence is Glycerol-3-phosphate acyltransferase 1 (186 aa).

5 helical membrane passes run 9–29, 58–78, 85–105, 121–141, and 161–181; these read MQFL…AYIV, GYFV…VSIA, STFV…PVLF, IAFD…FYLI, and ILYS…VLIL.

This sequence belongs to the PlsY family. As to quaternary structure, probably interacts with PlsX.

It localises to the cell membrane. It carries out the reaction an acyl phosphate + sn-glycerol 3-phosphate = a 1-acyl-sn-glycero-3-phosphate + phosphate. It functions in the pathway lipid metabolism; phospholipid metabolism. Its function is as follows. Catalyzes the transfer of an acyl group from acyl-phosphate (acyl-PO(4)) to glycerol-3-phosphate (G3P) to form lysophosphatidic acid (LPA). This enzyme utilizes acyl-phosphate as fatty acyl donor, but not acyl-CoA or acyl-ACP. The chain is Glycerol-3-phosphate acyltransferase 1 from Bacillus cereus (strain ZK / E33L).